Reading from the N-terminus, the 346-residue chain is MDQYCILGRIGEGAHGIVFKAKHVETGEIVALKKVALRRLEDGFPNQALREIKALQEMEDNQYVVQLKAVFPHGGGFVLAFEFMLSDLAEVVRHAQRPLAQAQVKSYLQMLLKGVAFCHANNIVHRDLKPANLLISASGQLKIADFGLARVFSPDGSRLYTHQVATRWYRAPELLYGARQYDQGVDLWSVGCIMGELLNGSPLFPGKNDIEQLCYVLRILGTPNPQVWPELTELPDYNKISFKEQVPMPLEEVLPDVSPQALDLLGQFLLYPPHQRIAASKALLHQYFFTAPLPAHPSELPIPQRLGGPAPKAHPGPPHIHDFHVDRPLEESLLNPELIRPFILEG.

The region spanning 4-288 (YCILGRIGEG…ASKALLHQYF (285 aa)) is the Protein kinase domain. ATP-binding positions include 10–18 (IGEGAHGIV) and K33. The active-site Proton acceptor is D127.

The protein belongs to the protein kinase superfamily. CMGC Ser/Thr protein kinase family. CDC2/CDKX subfamily. In terms of assembly, monomer. Interacts with TBC1D32. Interacts with MAK.

Its subcellular location is the nucleus. The protein resides in the cytoplasm. The protein localises to the cell projection. It is found in the cilium. The enzyme catalyses L-seryl-[protein] + ATP = O-phospho-L-seryl-[protein] + ADP + H(+). It catalyses the reaction L-threonyl-[protein] + ATP = O-phospho-L-threonyl-[protein] + ADP + H(+). Its function is as follows. Required for high-level Shh responses in the developing neural tube. Together with TBC1D32, controls the structure of the primary cilium by coordinating assembly of the ciliary membrane and axoneme, allowing GLI2 to be properly activated in response to SHH signaling. Involved in cell growth. Activates CDK2, a kinase involved in the control of the cell cycle, by phosphorylating residue 'Thr-160'. The polypeptide is Cyclin-dependent kinase 20 (CDK20) (Homo sapiens (Human)).